The sequence spans 642 residues: Threonine--tRNA ligase (642 aa).

The TGS domain occupies 1-61; that stretch reads MPVITLPDGS…ENDATLSIIT (61 aa). The segment at 243–534 is catalytic; it reads DHRKIGKQLD…LTEEFAGFFP (292 aa). Residues C334, H385, and H511 each contribute to the Zn(2+) site.

This sequence belongs to the class-II aminoacyl-tRNA synthetase family. Homodimer. Zn(2+) serves as cofactor.

The protein localises to the cytoplasm. It carries out the reaction tRNA(Thr) + L-threonine + ATP = L-threonyl-tRNA(Thr) + AMP + diphosphate + H(+). Functionally, catalyzes the attachment of threonine to tRNA(Thr) in a two-step reaction: L-threonine is first activated by ATP to form Thr-AMP and then transferred to the acceptor end of tRNA(Thr). Also edits incorrectly charged L-seryl-tRNA(Thr). This chain is Threonine--tRNA ligase, found in Salmonella paratyphi A (strain ATCC 9150 / SARB42).